A 159-amino-acid polypeptide reads, in one-letter code: NADH-quinone oxidoreductase subunit B (159 aa).

Positions 32, 33, 97, and 126 each coordinate [4Fe-4S] cluster.

It belongs to the complex I 20 kDa subunit family. As to quaternary structure, NDH-1 is composed of 14 different subunits. Subunits NuoB, C, D, E, F, and G constitute the peripheral sector of the complex. The cofactor is [4Fe-4S] cluster.

It localises to the cell inner membrane. It carries out the reaction a quinone + NADH + 5 H(+)(in) = a quinol + NAD(+) + 4 H(+)(out). NDH-1 shuttles electrons from NADH, via FMN and iron-sulfur (Fe-S) centers, to quinones in the respiratory chain. The immediate electron acceptor for the enzyme in this species is believed to be ubiquinone. Couples the redox reaction to proton translocation (for every two electrons transferred, four hydrogen ions are translocated across the cytoplasmic membrane), and thus conserves the redox energy in a proton gradient. In Helicobacter pylori (strain HPAG1), this protein is NADH-quinone oxidoreductase subunit B.